Consider the following 123-residue polypeptide: Con-ikot-ikot (123 aa).

An N-terminal signal peptide occupies residues 1-18 (MAMNMSMTLCMFVMVVVA). Residues 19 to 37 (ATVIDSTQLQEPDLSRMRR) constitute a propeptide that is removed on maturation. 5 disulfide bridges follow: Cys-49–Cys-80, Cys-50–Cys-89, Cys-57–Cys-72, Cys-90–Cys-118, and Cys-96–Cys-113.

Homodimer; disulfide-linked. Expressed by the venom duct.

Its subcellular location is the secreted. Functionally, potently and selectively blocks the desensitization of ionotropic glutamate AMPA receptors (GRIA1, GRIA2, GRIA3 and GRIA4). Binds to a different site than does the drug cyclothiazide. The toxin acts like a straitjacket on the 'gating ring' of the ligand-binding domain (LBD) of the receptor. It does so by restraining the domains via both intra- and interdimer cross-links such that agonist-induced closure of the LBD 'clamshells' is transduced into an irislike expansion of the gating ring. Compared to other desensitization blockers, it is a poor stabilizer of the open channel because toxin-bound AMPA receptors undergo frequent brief closures. In vitro, application of the toxin to hippocampal slices causes a large and rapid increase in resting AMPA receptor-mediated current leading to neuronal death. In Conus striatus (Striated cone), this protein is Con-ikot-ikot.